The chain runs to 521 residues: MKTAHWADFYAEKIKKEKGPKNLYTVASGITPSGTVHIGNFREVISVDLVARALRDSGSKVRFIYSWDNYDVFRKVPKNMPEQELLTTYLRQAITRVPDTRSHKTSYARANEIEFEKYLPVVGINPEFIDQSKQYTSNAYASQIKFALDHKKELSEALNEYRTSKLEENWYPISVFCTKCNRDTTTVNNYDNHYSVEYSCECGNQESLDIRTTWAIKLPWRIDWPMRWKYEKVDFEPAGKDHHSSGGSFDTSKNIVKIFQGSPPVTFQYDFISIKGRGGKISSSSGDVISLKDVLEVYTPEVTRFLFAATKPNTEFSISFDLDVIKIYEDYDKFERIYYGVEDVKEEKKRAFKRIYELSQPYMPSKRIPYQVGFRHLSVISQIFENNINKILNYLKNVQEDQKDKLINKINCAINWIRDFAPEDFKFSLRSKFDNMEILEENSKKAINELLDFLKKNFEVATEQDIQNEIYKISRENNIEPALFFKQIYKILIDKEKGPKLAGFIKIIGIDRFEKITSKYV.

The short motif at 32–40 is the 'HIGH' region element; the sequence is PSGTVHIGN. The 'KMSKS' region motif lies at 280–284; sequence KISSS.

It belongs to the class-I aminoacyl-tRNA synthetase family.

It is found in the cytoplasm. It carries out the reaction tRNA(Lys) + L-lysine + ATP = L-lysyl-tRNA(Lys) + AMP + diphosphate. The sequence is that of Lysine--tRNA ligase (lysS) from Borreliella burgdorferi (strain ATCC 35210 / DSM 4680 / CIP 102532 / B31) (Borrelia burgdorferi).